The primary structure comprises 181 residues: Extracellular superoxide dismutase [Cu-Zn] (181 aa).

The signal sequence occupies residues 1-18; that stretch reads MMQYLVVSLALCATICSA. Asparagine 46 carries an N-linked (GlcNAc...) asparagine glycan. The Cu cation site is built by histidine 75, histidine 77, and histidine 92. Cysteine 86 and cysteine 175 are joined by a disulfide. Positions 92, 100, 109, and 112 each coordinate Zn(2+). Residue asparagine 119 is glycosylated (N-linked (GlcNAc...) asparagine). Histidine 149 is a Cu cation binding site. N-linked (GlcNAc...) asparagine glycosylation occurs at asparagine 159.

The protein belongs to the Cu-Zn superoxide dismutase family. Cu cation is required as a cofactor. Requires Zn(2+) as cofactor. Expressed at higher levels in females compared to males.

Its subcellular location is the secreted. It catalyses the reaction 2 superoxide + 2 H(+) = H2O2 + O2. In terms of biological role, protects the extracellular space from the toxic effects of reactive oxygen intermediates by converting superoxide radicals into hydrogen peroxide and oxygen. The protein is Extracellular superoxide dismutase [Cu-Zn] of Drosophila melanogaster (Fruit fly).